The following is a 176-amino-acid chain: Ribosome maturation factor RimM (176 aa).

Residues 96-176 (PEDEFYWRDL…QILVDWDPDF (81 aa)) form the PRC barrel domain.

The protein belongs to the RimM family. As to quaternary structure, binds ribosomal protein uS19.

Its subcellular location is the cytoplasm. An accessory protein needed during the final step in the assembly of 30S ribosomal subunit, possibly for assembly of the head region. Essential for efficient processing of 16S rRNA. May be needed both before and after RbfA during the maturation of 16S rRNA. It has affinity for free ribosomal 30S subunits but not for 70S ribosomes. This is Ribosome maturation factor RimM from Shewanella piezotolerans (strain WP3 / JCM 13877).